Consider the following 388-residue polypeptide: Probable acetyl-CoA acetyltransferase (388 aa).

The active-site Acyl-thioester intermediate is the cysteine 84. Residue lysine 187 forms an Isoglutamyl lysine isopeptide (Lys-Gln) (interchain with Q-Cter in protein Pup) linkage. Residues histidine 345 and cysteine 375 each act as proton acceptor in the active site.

Belongs to the thiolase-like superfamily. Thiolase family.

The enzyme catalyses 2 acetyl-CoA = acetoacetyl-CoA + CoA. This is Probable acetyl-CoA acetyltransferase from Mycolicibacterium smegmatis (strain ATCC 700084 / mc(2)155) (Mycobacterium smegmatis).